The sequence spans 440 residues: Transposon Ty1-GR1 Gag polyprotein (440 aa).

Low complexity predominate over residues 1–16; sequence MESQQLSQHSHISHGS. 3 disordered regions span residues 1–93, 126–173, and 352–440; these read MESQ…MMTQ, PQSQ…RPPP, and GSRN…PGTY. Composition is skewed to polar residues over residues 48 to 60, 71 to 93, and 127 to 152; these read TKAN…TPAS, SPQT…MMTQ, and QSQF…GNTF. Residues 153-165 are compositionally biased toward low complexity; it reads TDSSSADSDMTST. Residues 299-401 are RNA-binding; it reads NNGIHINNKV…NSKSKTARAH (103 aa). Residues 402-418 show a composition bias toward low complexity; sequence NVSTSNNSPSTDNDSIS. Position 416 is a phosphoserine (serine 416). Polar residues predominate over residues 419–428; that stretch reads KSTTEPIQLN. Residues 429–440 are compositionally biased toward basic and acidic residues; that stretch reads NKHDLHLRPGTY.

In terms of assembly, homotrimer.

The protein resides in the cytoplasm. Functionally, capsid protein (CA) is the structural component of the virus-like particle (VLP), forming the shell that encapsulates the retrotransposons dimeric RNA genome. The particles are assembled from trimer-clustered units and there are holes in the capsid shells that allow for the diffusion of macromolecules. CA also has nucleocapsid-like chaperone activity, promoting primer tRNA(i)-Met annealing to the multipartite primer-binding site (PBS), dimerization of Ty1 RNA and initiation of reverse transcription. The chain is Transposon Ty1-GR1 Gag polyprotein (TY1A-GR1) from Saccharomyces cerevisiae (strain ATCC 204508 / S288c) (Baker's yeast).